We begin with the raw amino-acid sequence, 388 residues long: Protochlorophyllide reductase A, chloroplastic (388 aa).

A chloroplast-targeting transit peptide spans 1–74; that stretch reads MALQLLPSTL…KPSGKKTLRQ (74 aa).

This sequence belongs to the short-chain dehydrogenases/reductases (SDR) family. POR subfamily.

It localises to the plastid. The protein localises to the chloroplast. The catalysed reaction is chlorophyllide a + NADP(+) = protochlorophyllide a + NADPH + H(+). It functions in the pathway porphyrin-containing compound metabolism; chlorophyll biosynthesis. In terms of biological role, phototransformation of protochlorophyllide (Pchlide) to chlorophyllide (Chlide). The chain is Protochlorophyllide reductase A, chloroplastic (PORA) from Triticum aestivum (Wheat).